Reading from the N-terminus, the 374-residue chain is Agmatine deiminase (374 aa).

Residues Asp-220 and Asp-226 each contribute to the agmatine site. The Amidino-cysteine intermediate role is filled by Cys-366.

Belongs to the agmatine deiminase family. Forms homodimers.

The catalysed reaction is agmatine + H2O = N-carbamoylputrescine + NH4(+). It functions in the pathway amine and polyamine biosynthesis; putrescine biosynthesis via agmatine pathway; N-carbamoylputrescine from agmatine: step 1/1. Functionally, mediates the hydrolysis of agmatine into N-carbamoylputrescine in the arginine decarboxylase (ADC) pathway of putrescine biosynthesis, a basic polyamine. In Medicago truncatula (Barrel medic), this protein is Agmatine deiminase.